The sequence spans 231 residues: 5'-methylthioadenosine/S-adenosylhomocysteine nucleosidase (231 aa).

Glu-12 serves as the catalytic Proton acceptor. Residues Gly-78, Met-153, and 174-175 each bind substrate; that span reads ME. Catalysis depends on Asp-198, which acts as the Proton donor.

The protein belongs to the PNP/UDP phosphorylase family. MtnN subfamily.

It carries out the reaction S-adenosyl-L-homocysteine + H2O = S-(5-deoxy-D-ribos-5-yl)-L-homocysteine + adenine. The enzyme catalyses S-methyl-5'-thioadenosine + H2O = 5-(methylsulfanyl)-D-ribose + adenine. It catalyses the reaction 5'-deoxyadenosine + H2O = 5-deoxy-D-ribose + adenine. It functions in the pathway amino-acid biosynthesis; L-methionine biosynthesis via salvage pathway; S-methyl-5-thio-alpha-D-ribose 1-phosphate from S-methyl-5'-thioadenosine (hydrolase route): step 1/2. Functionally, catalyzes the irreversible cleavage of the glycosidic bond in both 5'-methylthioadenosine (MTA) and S-adenosylhomocysteine (SAH/AdoHcy) to adenine and the corresponding thioribose, 5'-methylthioribose and S-ribosylhomocysteine, respectively. Also cleaves 5'-deoxyadenosine, a toxic by-product of radical S-adenosylmethionine (SAM) enzymes, into 5-deoxyribose and adenine. The polypeptide is 5'-methylthioadenosine/S-adenosylhomocysteine nucleosidase (Bacillus cereus (strain G9842)).